Here is a 216-residue protein sequence, read N- to C-terminus: ATP-dependent dethiobiotin synthetase BioD (216 aa).

Residue 13-18 (EVGKTY) coordinates ATP. Position 17 (T17) interacts with Mg(2+). K38 is an active-site residue. T42 contributes to the substrate binding site. Residues D47 and 112–115 (EGVG) contribute to the ATP site. Mg(2+) contacts are provided by D47 and E112.

Belongs to the dethiobiotin synthetase family. As to quaternary structure, homodimer. Requires Mg(2+) as cofactor.

It localises to the cytoplasm. The catalysed reaction is (7R,8S)-7,8-diammoniononanoate + CO2 + ATP = (4R,5S)-dethiobiotin + ADP + phosphate + 3 H(+). It participates in cofactor biosynthesis; biotin biosynthesis; biotin from 7,8-diaminononanoate: step 1/2. Catalyzes a mechanistically unusual reaction, the ATP-dependent insertion of CO2 between the N7 and N8 nitrogen atoms of 7,8-diaminopelargonic acid (DAPA, also called 7,8-diammoniononanoate) to form a ureido ring. The sequence is that of ATP-dependent dethiobiotin synthetase BioD from Endomicrobium trichonymphae.